The chain runs to 380 residues: Lipid-A-disaccharide synthase (380 aa).

It belongs to the LpxB family.

It catalyses the reaction a lipid X + a UDP-2-N,3-O-bis[(3R)-3-hydroxyacyl]-alpha-D-glucosamine = a lipid A disaccharide + UDP + H(+). Its pathway is bacterial outer membrane biogenesis; LPS lipid A biosynthesis. Its function is as follows. Condensation of UDP-2,3-diacylglucosamine and 2,3-diacylglucosamine-1-phosphate to form lipid A disaccharide, a precursor of lipid A, a phosphorylated glycolipid that anchors the lipopolysaccharide to the outer membrane of the cell. The sequence is that of Lipid-A-disaccharide synthase from Francisella philomiragia subsp. philomiragia (strain ATCC 25017 / CCUG 19701 / FSC 153 / O#319-036).